Consider the following 194-residue polypeptide: PRELI domain containing protein 3B (194 aa).

The region spanning 1 to 172 (MKIWTSEHVF…VIHKLNAEIE (172 aa)) is the PRELI/MSF1 domain. Ser46 and Ser51 each carry phosphoserine.

This sequence belongs to the slowmo family.

This is PRELI domain containing protein 3B (PRELID3B) from Homo sapiens (Human).